A 342-amino-acid polypeptide reads, in one-letter code: Trace amine-associated receptor 3 (342 aa).

Residues 1–35 (MDLIYIPEDLSSCPKFGNKSCPPTNRSFRVRLIMY) are Extracellular-facing. Residues asparagine 18 and asparagine 25 are each glycosylated (N-linked (GlcNAc...) asparagine). Cystine bridges form between cysteine 21-cysteine 185 and cysteine 104-cysteine 189. Residues 36 to 56 (LLMTGAMVITIFGNLVIIISI) form a helical membrane-spanning segment. Topologically, residues 57–68 (SHFKQLHSPTNF) are cytoplasmic. The helical transmembrane segment at 69–89 (LILSMATTDFLLGFVIMPYSM) threads the bilayer. Topologically, residues 90 to 150 (VRSVESCWYF…TTMTASMIKR (61 aa)) are extracellular. A helical transmembrane segment spans residues 151–168 (LLFFCWAAPALFSFGLVL). The Cytoplasmic portion of the chain corresponds to 169–172 (SEAN). The interval 173–186 (VSGMQSYEILIACF) is extracellular Loop 2 (ECL2). Residues 173–193 (VSGMQSYEILIACFNFCALTF) form a helical membrane-spanning segment. At 194-198 (NKFWG) the chain is on the extracellular side. The chain crosses the membrane as a helical span at residues 199–223 (TILFTTCFFTPGSIMVGIYGKIFIV). The Cytoplasmic segment spans residues 224 to 256 (SRRHARALGNMPENTKGAGRNLSKKKDRKAAKT). Residues 257 to 277 (LGIVMGVFLACWLPCFLAVLI) form a helical membrane-spanning segment. Over 278-286 (DPYLDYSTP) the chain is Extracellular. A helical membrane pass occupies residues 287-307 (IIVLDLLVWLGYFNSTCNPLI). The Cytoplasmic segment spans residues 308-342 (HGFFYPWFRKALEHIVSGKIFRSNSDTANLFPEAH).

It belongs to the G-protein coupled receptor 1 family.

Its subcellular location is the cell membrane. Its function is as follows. Olfactory receptor activated by several primary trace amines, including isoamylamine. Activated by isoamylamine and cyclohexylamine, but not to the corresponding alcohols, isoamylalcohol and cyclohexanol. This receptor is probably mediated by the G(s)-class of G-proteins which activate adenylate cyclase. The chain is Trace amine-associated receptor 3 (Taar3) from Rattus norvegicus (Rat).